A 640-amino-acid polypeptide reads, in one-letter code: MTISWRALSHFLIPQSDYGEAKTHLEQLQQTLTHLDHPHHHHAHHPHHHLGLYHGALPNTSTITTDSVVSCVSSTLPAVAKAISASSSCDGLQSERKKCPISDLDSGGHGHGQGHGLMEAICAGQKTSPIPPPPPPCCLTLGESSSSPNPIATAALMNASTSGSSSAGGASASLCNDLTRESSWYAHHHHHHHHHHHQLPDELVMYATPTPTPAIGKFGLDTSTEGYLNARYNVNVKGVRHDRTSSFFDIPAVTHPHNHPHPHPHPHPHPYCYRFPSSPPAGILKKSDEEATSAAVYCSDVSSGQHFPHHTKIEHADSTTTAAQQQQQQQEQQQQQQQQQQQQQHQQQLQQAAALHPHHHHSHHGHHGHQQAEQQALTHLTPLHAASAFKFSHTAVISSSAVYATPSHYAHQQQTQSQSVYRDLSPTTLAAVSDADLKYDSGPYNAAISSTYPSALRPNVVDSTTSSDAELRLDQFYASNGISTSSNGQAISQRRGSLQLWQFLVALLDEPTTSASCIAWTGRGMEFKLIEPEEVARRWGLQKNRPAMNYDKLSRSLRYYYEKGIMQKVNGERYVYRFVCDPDALFNMAYGHLTTGSGKGDQHQLTLSLAKTPPTSGDSQTQSPRVAKSEYYDTAALHKY.

Residues 315–375 form a disordered region; it reads HADSTTTAAQ…HHGHQQAEQQ (61 aa). Positions 321 to 356 form a coiled coil; sequence TAAQQQQQQQEQQQQQQQQQQQQQHQQQLQQAAALH. The span at 322 to 355 shows a compositional bias: low complexity; sequence AAQQQQQQQEQQQQQQQQQQQQQHQQQLQQAAAL. Residues 356–369 show a composition bias toward basic residues; sequence HPHHHHSHHGHHGH. The segment at residues 498–579 is a DNA-binding region (ETS); it reads LQLWQFLVAL…NGERYVYRFV (82 aa). Over residues 609 to 624 the composition is skewed to polar residues; it reads LAKTPPTSGDSQTQSP. Residues 609-628 are disordered; sequence LAKTPPTSGDSQTQSPRVAK.

The protein belongs to the ETS family. In terms of tissue distribution, in the adult brain, expressed almost exclusively in dopaminergic neurons.

It is found in the nucleus. Required in dopaminergic neurons to regulate expression of genes involved in dopamine signaling. Decreases expression of the dopamine transporter DAT and increases expression of the dopamine transporter Vmat and the tyrosine 3-monooxygenase ple which is involved in dopamine biosynthesis. Also involved in negatively regulating the expression of a group of endoplasmic reticulum proteins, the molecular chaperone Calr and the protein disulfide isomerases CaBP1 and ERp60. This is ETV5-related protein Ets96B from Drosophila melanogaster (Fruit fly).